A 103-amino-acid polypeptide reads, in one-letter code: Small ribosomal subunit protein uS10c (103 aa).

The protein belongs to the universal ribosomal protein uS10 family. Part of the 30S ribosomal subunit.

It is found in the plastid. The protein localises to the chloroplast. In terms of biological role, involved in the binding of tRNA to the ribosomes. The chain is Small ribosomal subunit protein uS10c from Trieres chinensis (Marine centric diatom).